Consider the following 248-residue polypeptide: uncharacterized protein (248 aa).

The N-terminal stretch at 1 to 26 (MVAPRISPKIVLVGFALFAIISASLA) is a signal peptide.

This is an uncharacterized protein from Acanthamoeba polyphaga mimivirus (APMV).